Reading from the N-terminus, the 453-residue chain is MKECKTFNNKKVLILGLAKSGEAAARLLSRLGAIVTVNDGKAFEENPAAQSLLEEGIKVVCGSHPLELLDEDFAVMVKNPGIPYQNPMVEKALSKGIPVLTEVELAYLISEAPIIAITGSNGKTTTTTMIADVLNHGGKSALLSGNIGFPASEVAMTASQDDILTMELSSFQLMGIKDFHPHIALITNLMPTHLDYHGSFDAYIQAKWNIQNNMTADDVLILNAEQDQTKELAQKTQASLVYFSSKEKVEGAYQEDGKLFYKGEYIMDAQSLGVPGLHNVENALATIAVAKLSGISNQAIAETLSSFGGVKHRLQKLGTIKDVAFYNDSKSTNILACQKALSGFDNNKVILIAGGLDRGNAFDTLIPDIKGLKKMILLGESAEKMKEAAERAGVGYLEAKDVADATRIAFEQAQPGDIILLSPANASWDMYPNFEVRGDEFIESFQQLKGDME.

119-125 (GSNGKTT) is a binding site for ATP.

This sequence belongs to the MurCDEF family.

It is found in the cytoplasm. The catalysed reaction is UDP-N-acetyl-alpha-D-muramoyl-L-alanine + D-glutamate + ATP = UDP-N-acetyl-alpha-D-muramoyl-L-alanyl-D-glutamate + ADP + phosphate + H(+). It functions in the pathway cell wall biogenesis; peptidoglycan biosynthesis. In terms of biological role, cell wall formation. Catalyzes the addition of glutamate to the nucleotide precursor UDP-N-acetylmuramoyl-L-alanine (UMA). In Streptococcus uberis (strain ATCC BAA-854 / 0140J), this protein is UDP-N-acetylmuramoylalanine--D-glutamate ligase.